Here is a 339-residue protein sequence, read N- to C-terminus: DNA-directed RNA polymerase subunit alpha (339 aa).

The segment at 1-233 (MVREEVAGST…DLFLPFLHAE (233 aa)) is alpha N-terminal domain (alpha-NTD). The segment at 264–339 (KKGIPLNCIF…IDLLKNKLSF (76 aa)) is alpha C-terminal domain (alpha-CTD).

The protein belongs to the RNA polymerase alpha chain family. In terms of assembly, in plastids the minimal PEP RNA polymerase catalytic core is composed of four subunits: alpha, beta, beta', and beta''. When a (nuclear-encoded) sigma factor is associated with the core the holoenzyme is formed, which can initiate transcription.

The protein localises to the plastid. The protein resides in the chloroplast. It carries out the reaction RNA(n) + a ribonucleoside 5'-triphosphate = RNA(n+1) + diphosphate. Functionally, DNA-dependent RNA polymerase catalyzes the transcription of DNA into RNA using the four ribonucleoside triphosphates as substrates. The sequence is that of DNA-directed RNA polymerase subunit alpha from Elymus californicus (California bottlebrush grass).